Consider the following 286-residue polypeptide: Nucleotide-binding protein HS_1178 (286 aa).

Residue 8–15 (GRSGAGKS) participates in ATP binding. 56–59 (DIRN) contributes to the GTP binding site.

The protein belongs to the RapZ-like family.

Displays ATPase and GTPase activities. The chain is Nucleotide-binding protein HS_1178 from Histophilus somni (strain 129Pt) (Haemophilus somnus).